The sequence spans 282 residues: Fused uL13/uS9 ribosomal subunit protein (282 aa).

Residues 1-141 (MLLMIINGEG…LGEISELLGA (141 aa)) are large ribosomal subunit protein uL13. A small ribosomal subunit protein uS9 region spans residues 150 to 282 (MKKVIHTSGK…ARARRQKSYR (133 aa)). The segment at 259–282 (DPRRSEPKKYGGRGARARRQKSYR) is disordered. A compositionally biased stretch (basic residues) spans 273-282 (ARARRQKSYR).

This sequence in the N-terminal section; belongs to the universal ribosomal protein uL13 family. In the C-terminal section; belongs to the universal ribosomal protein uS9 family. As to quaternary structure, L13 is part of the 50S ribosomal subunit. S9 is part of the 30S ribosomal subunit.

Its function is as follows. L13 protein is one of the early assembly proteins of the 50S ribosomal subunit, although it is not seen to bind rRNA by itself. It is important during the early stages of 50S assembly. The sequence is that of Fused uL13/uS9 ribosomal subunit protein (rpl13/rps9) from Methanothermobacter thermautotrophicus (strain ATCC 29096 / DSM 1053 / JCM 10044 / NBRC 100330 / Delta H) (Methanobacterium thermoautotrophicum).